A 595-amino-acid chain; its full sequence is Phosphomethylpyrimidine synthase (595 aa).

Residues 97-120 (GRDVRPEDNGFTKDDDPRAAREVF) show a composition bias toward basic and acidic residues. A disordered region spans residues 97–134 (GRDVRPEDNGFTKDDDPRAAREVFPRTSSHKPLRAKKG). The segment covering 124 to 133 (SSHKPLRAKK) has biased composition (basic residues). Residues N202, M231, Y260, H296, 316–318 (SRG), 357–360 (DGLR), and E396 each bind substrate. H400 is a binding site for Zn(2+). Y423 is a binding site for substrate. H464 provides a ligand contact to Zn(2+). C544, C547, and C552 together coordinate [4Fe-4S] cluster.

The protein belongs to the ThiC family. The cofactor is [4Fe-4S] cluster.

The enzyme catalyses 5-amino-1-(5-phospho-beta-D-ribosyl)imidazole + S-adenosyl-L-methionine = 4-amino-2-methyl-5-(phosphooxymethyl)pyrimidine + CO + 5'-deoxyadenosine + formate + L-methionine + 3 H(+). Its pathway is cofactor biosynthesis; thiamine diphosphate biosynthesis. Functionally, catalyzes the synthesis of the hydroxymethylpyrimidine phosphate (HMP-P) moiety of thiamine from aminoimidazole ribotide (AIR) in a radical S-adenosyl-L-methionine (SAM)-dependent reaction. This is Phosphomethylpyrimidine synthase from Halalkalibacterium halodurans (strain ATCC BAA-125 / DSM 18197 / FERM 7344 / JCM 9153 / C-125) (Bacillus halodurans).